A 243-amino-acid polypeptide reads, in one-letter code: MPTDADYLIDSQDPRHPANLICTLCKQFFDFNWCTGTGGGISIKHPQTGHLYVAPSGVQKEQMKPHDMFVVDGKSYEYLRIPPGLKPSACTPLFNACYKYKSAGAIVHTHSLNAVTCSLIFGQEFRIRGVEQIKAIPSDRKDPSTGKVLNLNWDDTCVIPIIENRPHEDQLEDPLMETFEKYPHACAVIVRRHGIFVWGPTIEKAKVINEALDYLMELAVKMHQLGIPPDCSVGQESKYISKH.

Position 90 (cysteine 90) interacts with substrate. Positions 108 and 110 each coordinate Zn(2+). Catalysis depends on glutamate 131, which acts as the Proton donor/acceptor. Histidine 193 is a Zn(2+) binding site.

The protein belongs to the aldolase class II family. MtnB subfamily. Zn(2+) is required as a cofactor.

The protein resides in the cytoplasm. The catalysed reaction is 5-(methylsulfanyl)-D-ribulose 1-phosphate = 5-methylsulfanyl-2,3-dioxopentyl phosphate + H2O. It participates in amino-acid biosynthesis; L-methionine biosynthesis via salvage pathway; L-methionine from S-methyl-5-thio-alpha-D-ribose 1-phosphate: step 2/6. In terms of biological role, catalyzes the dehydration of methylthioribulose-1-phosphate (MTRu-1-P) into 2,3-diketo-5-methylthiopentyl-1-phosphate (DK-MTP-1-P). This Zygosaccharomyces rouxii (strain ATCC 2623 / CBS 732 / NBRC 1130 / NCYC 568 / NRRL Y-229) protein is Methylthioribulose-1-phosphate dehydratase.